Here is a 747-residue protein sequence, read N- to C-terminus: MKLNATYIKIRDKWWGLPLFLPSLILPIFAHINTFAHISSGEVFLFYLPLALMISMMMFFSWAALPGIALGIFVRKYAELGFYETLSLTANFIIIIILCWGGYRVFTPRRNNVSHGDTRLISQRIFWQIVFPATLFLILFQFAAFVGLLASRENLVGVMPFNLGTLINYQALLVGNLIGVPLCYFIIRVVRNPFYLRSYYSQLKQQVDAKVTKKEFALWLLALGALLLLLCMPLNEKSTIFSTNYTLSLLLPLMMWGAMRYGYKLISLLWAVVLMISIHSYQNYIPIYPGYTTQLTITSSSYLVFSFIVNYMAVLATRQRAVVRRIQRLAYVDPVVHLPNVRALNRALRDAPWSALCYLRIPGMEMLVKNYGIMLRIQYKQKLSHWLSPLLEPGEDVYQLSGNDLALRLNTESHQERITALDSHLKQFRFFWDGMPMQPQIGVSYCYVRSPVNHIYLLLGELNTVAELSIVTNAPENMQRRGAMYLQRELKDKVAMMNRLQQALEHNHFFLMAQPITGMRGDVYHEILLRMKGENDELISPDSFLPVAHEFGLSSSIDMWVIEHTLQFMAENRAKMPAHRFAINLSPTSVCQARFPVEVSQLLAKYQIEAWQLIFEVTESNALTNVKQAQITLQHLQELGCQIAIDDFGTGYASYARLKNVNADLLKIDGSFIRNIVSNSLDYQIVASICHLARMKKMLVVAEYVENEEIREAVLSLGIDYMQGYLIGKPQPLIDTLNEIEPIRESA.

Over Met1–Trp14 the chain is Periplasmic. Residues Trp15–Ala36 traverse the membrane as a helical segment. Residues His37–Glu42 lie on the Cytoplasmic side of the membrane. Residues Val43–Leu65 form a helical membrane-spanning segment. Residues Pro66–Glu79 are Periplasmic-facing. Residues Leu80–Gly102 traverse the membrane as a helical segment. Residues Tyr103–Gln128 are Cytoplasmic-facing. The helical transmembrane segment at Ile129–Ser151 threads the bilayer. At Arg152–Thr165 the chain is on the periplasmic side. A helical transmembrane segment spans residues Leu166–Arg188. The Cytoplasmic portion of the chain corresponds to Val189–Glu215. The helical transmembrane segment at Phe216–Asn235 threads the bilayer. The Periplasmic portion of the chain corresponds to Glu236–Thr239. Residues Ile240 to Met259 form a helical membrane-spanning segment. Residues Arg260–Leu265 are Cytoplasmic-facing. The helical transmembrane segment at Ile266–Ile285 threads the bilayer. At Pro286–Gln294 the chain is on the periplasmic side. Residues Leu295–Thr317 traverse the membrane as a helical segment. Residues Arg318–Ala747 are Cytoplasmic-facing. An EAL domain is found at Lys493 to Arg744.

Mg(2+) is required as a cofactor. It depends on Mn(2+) as a cofactor.

The protein resides in the cell inner membrane. The enzyme catalyses 3',3'-c-di-GMP + H2O = 5'-phosphoguanylyl(3'-&gt;5')guanosine + H(+). Inhibited by pGpG. Phosphodiesterase (PDE) that catalyzes the hydrolysis of cyclic-di-GMP (c-di-GMP) to 5'-pGpG. Truncated proteins consisting of the GGDEF/EAL domains (residues 319-747) or of the EAL domain alone (481-747) have c-di-GMP phosphodiesterase activity. They do not have diguanylate cyclase activity. Cyclic-di-GMP is a second messenger which controls cell surface-associated traits in bacteria. The polypeptide is Cyclic di-GMP phosphodiesterase PdeF (Escherichia coli (strain K12)).